The chain runs to 73 residues: UPF0150 protein ssl0259 (73 aa).

It belongs to the UPF0150 family.

This chain is UPF0150 protein ssl0259, found in Synechocystis sp. (strain ATCC 27184 / PCC 6803 / Kazusa).